The sequence spans 233 residues: MNGRGFLIYNGGEKMKQKMIIYDTPAGPYPARVRIALAEKNMLSSVQFVRINLWKGEHKKPEFLAKNYSGTVPVLELDDGTLIAECTAITEYIDALDGTPTLTGKTPLEKGVIHMMNKRAELELLDPVSVYFHHATPGLGPEVELYQNKEWGLRQRDKALHGMHYFDTVLRERPYVAGDSFSMADITVIAGLIFAAIVKLQVPEECEALRAWYKRMQQRPSVKKLLEIRSKSS.

The GST N-terminal domain maps to 17–101 (QKMIIYDTPA…YIDALDGTPT (85 aa)). Glutathione is bound by residues Y29, H58, V72, 85–86 (EC), and H133. Residues 106–233 (TPLEKGVIHM…KLLEIRSKSS (128 aa)) enclose the GST C-terminal domain.

The protein belongs to the GST superfamily. As to quaternary structure, homodimer.

It carries out the reaction RX + glutathione = an S-substituted glutathione + a halide anion + H(+). The chain is Glutathione S-transferase 2 (GTT2) from Saccharomyces cerevisiae (strain ATCC 204508 / S288c) (Baker's yeast).